Here is a 430-residue protein sequence, read N- to C-terminus: Nacrein-like protein P2 (430 aa).

A glycan (N-linked (GlcNAc...) asparagine) is linked at Asn-27. The 397-residue stretch at 33–429 (AGFSYDRSIC…KNKVTVYKSF (397 aa)) folds into the Alpha-carbonic anhydrase domain. Residues His-132, His-134, and His-157 each coordinate Zn(2+). The segment at 201–312 (DEPDDEECKR…GENGHKHGCR (112 aa)) is disordered. The segment covering 207–219 (ECKRILKGHHPDN) has biased composition (basic and acidic residues). Low complexity predominate over residues 220–304 (NENGNGDNGN…NNGENGNNGE (85 aa)). 27 repeat units span residues 225–227 (GDN), 228–230 (GNN), 231–233 (GYN), 234–236 (GDN), 237–239 (GNN), 240–242 (GDN), 243–245 (GNN), 246–248 (GYN), 249–251 (GDN), 252–254 (GNN), 255–257 (GVN), 258–260 (GNN), 261–263 (GYN), 264–266 (GDN), 267–269 (GNN), 270–272 (GDN), 273–275 (GNN), 276–278 (GYN), 279–281 (GDN), 282–284 (GNN), 285–287 (GDN), 288–290 (GNN), 291–293 (GEN), 294–296 (GNN), 297–299 (GEN), 300–301 (GN), and 303–305 (GEN). The 27 X 3 AA approximate tandem repeats of G-X-N stretch occupies residues 225–305 (GDNGNNGYNG…NGENGNNGEN (81 aa)). 370–371 (TT) lines the substrate pocket.

The protein belongs to the alpha-carbonic anhydrase family. In terms of assembly, homooligomer; disulfide-linked. May also be disulfide-linked to insoluble organic matrix. It depends on Zn(2+) as a cofactor. As to expression, expressed in the mantle.

It localises to the secreted. The protein localises to the extracellular space. Its subcellular location is the extracellular matrix. The enzyme catalyses hydrogencarbonate + H(+) = CO2 + H2O. Its function is as follows. Acts as a negative regulator for calcification in the shells of mollusks. May function both as a calcium concentrator and as a carbonic anhydrase required for production of carbonate ions, which are assembled to CaCO(3) at mineralization sites. Is important for shell formation in both the calcitic prismatic layer and the aragonitic nacreous layer. Shows inhibitory activity of crystal formation when present in free state but, when attached to the insoluble matrix, may regulate the form and size of aragonite crystal. This chain is Nacrein-like protein P2, found in Mizuhopecten yessoensis (Japanese scallop).